The following is a 425-amino-acid chain: MPRITASKIVLLIALSFCITVIYHFPIATRSSKEYDEYGNEYENVASIESDIKNVRRLLDEVPDPSQNRLQFLKLDEHAFAFSAYTDDRNGNMGYKYVRVLMFITSQDNFSCEINGRKSTDVSLYEFSENHKMKWQMFILNCKLPDGIDFNNVSSVKVIRSTTKQFVDVPIRYRIQDEKIITPDEYDYKMSICVPALFGNGYDAKRIVEFIELNTLQGIEKIYIYTNQKELDGSMKKTLKYYSDNHKITLIDYTLPFREDGVWYHGQLATVTDCLLRNTGITKYTFFNDFDEFFVPVIKSRTLFETISGLFEDPTIGSQRTALKYINAKIKSAPYSLKNIVSEKRIETRFTKCVVRPEMVFEQGIHHTSRVIQDNYKTVSHGGSLLRVYHYKDKKYCCEDESLLKKRHGDQLREKFDSVVGLLDL.

The Cytoplasmic portion of the chain corresponds to 1–8 (MPRITASK). Residues 9 to 29 (IVLLIALSFCITVIYHFPIAT) traverse the membrane as a helical; Signal-anchor for type II membrane protein segment. The Lumenal portion of the chain corresponds to 30 to 425 (RSSKEYDEYG…FDSVVGLLDL (396 aa)). N109 and N152 each carry an N-linked (GlcNAc...) asparagine glycan. A GT92 domain is found at 189–394 (KMSICVPALF…LLRVYHYKDK (206 aa)).

Belongs to the glycosyltransferase 92 family. It depends on Mn(2+) as a cofactor. In terms of processing, N-glycosylated. As to expression, expressed in intestine and coelomocytes.

The protein localises to the golgi apparatus. It is found in the golgi stack membrane. Inhibited by EDTA, Cu(2+) and Zn(2+). Its function is as follows. Catalyzes the transfer of beta-galactose from UDP-galactose to position 4 of alpha-1,6-linked fucose at the reducing end GlcNAc in N-glycan cores. Involved in susceptibility to the nematotoxic C.cinerea galectin Cgl2, likely by contributing to the synthesis of core alpha-1,6-fucosylated N-glycans to which Cgl2 binds. This is Beta-1,4-galactosyltransferase galt-1 from Caenorhabditis elegans.